Consider the following 456-residue polypeptide: tRNA modification GTPase MnmE (456 aa).

(6S)-5-formyl-5,6,7,8-tetrahydrofolate contacts are provided by R24, E81, and K120. The region spanning 216–379 is the TrmE-type G domain; that stretch reads GMTVVIAGRP…LRDHLKACMG (164 aa). N226 contributes to the K(+) binding site. GTP-binding positions include 226–231, 245–251, 270–273, and 335–338; these read NAGKSS, TAIAGTT, DTAG, and NKAD. S230 contacts Mg(2+). Residues T245, I247, and T250 each contribute to the K(+) site. T251 is a Mg(2+) binding site. K456 contacts (6S)-5-formyl-5,6,7,8-tetrahydrofolate.

This sequence belongs to the TRAFAC class TrmE-Era-EngA-EngB-Septin-like GTPase superfamily. TrmE GTPase family. Homodimer. Heterotetramer of two MnmE and two MnmG subunits. It depends on K(+) as a cofactor.

The protein localises to the cytoplasm. Exhibits a very high intrinsic GTPase hydrolysis rate. Involved in the addition of a carboxymethylaminomethyl (cmnm) group at the wobble position (U34) of certain tRNAs, forming tRNA-cmnm(5)s(2)U34. This chain is tRNA modification GTPase MnmE, found in Pseudomonas putida (strain W619).